The sequence spans 453 residues: Formimidoylglutamate deiminase (453 aa).

Residues His56 and His58 each coordinate Zn(2+). The N-formimidoyl-L-glutamate site is built by Gln61, Arg82, Tyr121, His206, and Arg209. Residue His232 coordinates Zn(2+). An N-formimidoyl-L-glutamate-binding site is contributed by Glu235. Active-site proton acceptor residues include His269 and Asp320. Position 320 (Asp320) interacts with Zn(2+).

The protein belongs to the metallo-dependent hydrolases superfamily. As to quaternary structure, homodimer. Zn(2+) is required as a cofactor.

The enzyme catalyses N-formimidoyl-L-glutamate + H2O = N-formyl-L-glutamate + NH4(+). It participates in amino-acid degradation; L-histidine degradation into L-glutamate; L-glutamate from N-formimidoyl-L-glutamate (deiminase route): step 1/2. Its activity is regulated as follows. Inhibited by the metal chelator dipicolinate. Inhibited by N-formimino-L-aspartate and N-guanidino-L-glutaric acid. Functionally, catalyzes the hydrolysis of N-formimino-L-glutamate to N-formyl-L-glutamate and ammonia. This is Formimidoylglutamate deiminase from Pseudomonas aeruginosa (strain ATCC 15692 / DSM 22644 / CIP 104116 / JCM 14847 / LMG 12228 / 1C / PRS 101 / PAO1).